Here is a 290-residue protein sequence, read N- to C-terminus: Bifunctional protein FolD (290 aa).

Residues 169–171, isoleucine 194, and isoleucine 235 each bind NADP(+); that span reads GAS.

Belongs to the tetrahydrofolate dehydrogenase/cyclohydrolase family. Homodimer.

It carries out the reaction (6R)-5,10-methylene-5,6,7,8-tetrahydrofolate + NADP(+) = (6R)-5,10-methenyltetrahydrofolate + NADPH. The enzyme catalyses (6R)-5,10-methenyltetrahydrofolate + H2O = (6R)-10-formyltetrahydrofolate + H(+). It participates in one-carbon metabolism; tetrahydrofolate interconversion. In terms of biological role, catalyzes the oxidation of 5,10-methylenetetrahydrofolate to 5,10-methenyltetrahydrofolate and then the hydrolysis of 5,10-methenyltetrahydrofolate to 10-formyltetrahydrofolate. In Helicobacter pylori (strain HPAG1), this protein is Bifunctional protein FolD.